A 247-amino-acid chain; its full sequence is tRNA (guanine-N(1)-)-methyltransferase (247 aa).

Residues G115 and 135–140 (IGDYVL) each bind S-adenosyl-L-methionine.

This sequence belongs to the RNA methyltransferase TrmD family. In terms of assembly, homodimer.

Its subcellular location is the cytoplasm. The enzyme catalyses guanosine(37) in tRNA + S-adenosyl-L-methionine = N(1)-methylguanosine(37) in tRNA + S-adenosyl-L-homocysteine + H(+). Specifically methylates guanosine-37 in various tRNAs. In Alkaliphilus metalliredigens (strain QYMF), this protein is tRNA (guanine-N(1)-)-methyltransferase.